A 372-amino-acid chain; its full sequence is MSEHIILNPDETFTLNLGPQHPATHGVLRVKLTMDGEYIYSAETVIGYIHRMHEKMGENRTYNQYLPNLSRLDYLSAMAYCHGYVLAVEKAGSIEVPERAEYIRAITVELNRLSSHLVWFGAFIMDLGGFSPLMYAFDDREQILDLLESITGSRLTYCYYRFGGLYNDIDDEFLVGTRKFIIRMRKSLKTYRDLVTNNIILMKRLKDIGHISPEICRKYGATGPVARGSGINFDVRKNEPYSVYNEFDFDIPVYHEGDSYARYMVRMDEMEQSLRIIEQAMDKLPGGPIIPEKKPKIIKLPEGDYYSTVEAARGSFGIRLVSDGGKNAYRLKLRSPTFSNMHLFDEVCQGMLIADALALMGSLDLVIPEIDR.

It belongs to the complex I 49 kDa subunit family. NDH-1 is composed of 14 different subunits. Subunits NuoB, C, D, E, F, and G constitute the peripheral sector of the complex.

It localises to the cell inner membrane. The enzyme catalyses a quinone + NADH + 5 H(+)(in) = a quinol + NAD(+) + 4 H(+)(out). Its function is as follows. NDH-1 shuttles electrons from NADH, via FMN and iron-sulfur (Fe-S) centers, to quinones in the respiratory chain. The immediate electron acceptor for the enzyme in this species is believed to be ubiquinone. Couples the redox reaction to proton translocation (for every two electrons transferred, four hydrogen ions are translocated across the cytoplasmic membrane), and thus conserves the redox energy in a proton gradient. This is NADH-quinone oxidoreductase subunit D from Desulfotalea psychrophila (strain LSv54 / DSM 12343).